The following is a 236-amino-acid chain: Lipoprotein B (236 aa).

The signal sequence occupies residues 1–27; sequence MNKKYFKKYSSILIFSMSILAPMTLAS. C28 carries N-palmitoyl cysteine lipidation. C28 carries the S-diacylglycerol cysteine lipid modification. Disordered regions lie at residues 35 to 112 and 134 to 236; these read EKDK…KSNV and SEKQ…GDAF. Over residues 43–60 the composition is skewed to polar residues; that stretch reads STNLSEPNKSNTSKTNTF. Over residues 61–74 the composition is skewed to basic and acidic residues; the sequence is QDKKDSTNKIDSQE. Composition is skewed to polar residues over residues 75-112 and 143-157; these read SSKT…KSNV and NASS…NTLK. Residues 158–175 are compositionally biased toward basic and acidic residues; the sequence is NQDKTKQENDQFKQESKD. The segment covering 193 to 212 has biased composition (polar residues); that stretch reads VISSQSTTRLEMPKNDQSNS. The segment covering 215-228 has biased composition (basic and acidic residues); sequence EDNKKSPESPKWWE.

The protein belongs to the M.pulmonis LipAB lipoprotein family.

The protein localises to the cell membrane. The polypeptide is Lipoprotein B (lipB) (Mycoplasmopsis pulmonis (strain UAB CTIP) (Mycoplasma pulmonis)).